We begin with the raw amino-acid sequence, 481 residues long: Cytochrome P450 monooygenase 2 (481 aa).

The helical transmembrane segment at 12–32 (GSQLLPFYIAIFVFTLVPWAI) threads the bilayer. Heme is bound at residue C418.

Belongs to the cytochrome P450 family. Heme serves as cofactor.

The protein localises to the membrane. The protein operates within plant hormone biosynthesis; gibberellin biosynthesis. In terms of biological role, gibberellin 20-oxidase; part of the gene cluster that mediates the biosynthesis of gibberellins (GAs), diterpenoids that may provide a selective advantage during infection of the preferred host plant, rice. Gibberellins (GAs) are diterpenoids and are synthesized via the mevalonate pathway. Biosynthesis of the major metabolite GA3 (gibberellic acid) from geranylgeranyl diphosphate (GGPP) requires 13 steps. The GGPP produced by the geranylgeranyl diphosphate synthase GGS2 is converted to ent-kaurene via ent-copalyldiphosphate in a two-step cyclization reaction performed by the bifunctional ent-copalyl diphosphate synthase/ent-kaurene synthase enzyme (CPS/KS). Ent-Kaurene is metabolized to GAs by a series of oxidation reactions catalyzed by cytochrome P450 monooxygenases. Cytochrome P450 monooxygenase P450-4 is an ent-kaurene oxidase that catalyzes the three oxidation steps between ent-kaurene and ent-kaurenoic acid. The highly multifunctional cytochrome P450 monooxygenase P450-1 then catalyzes four steps involving oxidation at two carbon atoms, in the main pathway from ent-kaurenoic acid to GA14 via GA12-aldehyde as well as producing kaurenolides and fujenoic acids as by-products. The cytochrome P450 monooxygenase P450-2 then converts GA14 to GA4 by removal of C-20. GA4 is further converted to GA7 by the GA4 desaturase DES via 1,2-desaturation before cytochrome P450 monooxygenase P450-3, a 13-hydroxylase, hydroxylates GA7 to GA3, the final product of the GA-biosynthetic pathway. This is Cytochrome P450 monooygenase 2 from Gibberella fujikuroi (strain CBS 195.34 / IMI 58289 / NRRL A-6831) (Bakanae and foot rot disease fungus).